Here is a 165-residue protein sequence, read N- to C-terminus: Nascent polypeptide-associated complex subunit beta (165 aa).

The region spanning 33 to 97 is the NAC-A/B domain; that stretch reads TTDDKRLQST…PQTKKLQDIL (65 aa). Positions 120–165 are disordered; sequence QKQAPGAGDVPATIQEEDDDDDVPDLVVGETFETPATEEAPKAAAS. A compositionally biased stretch (acidic residues) spans 134–143; it reads QEEDDDDDVP. Over residues 144–165 the composition is skewed to low complexity; that stretch reads DLVVGETFETPATEEAPKAAAS.

This sequence belongs to the NAC-beta family. Part of the nascent polypeptide-associated complex (NAC).

This Arabidopsis thaliana (Mouse-ear cress) protein is Nascent polypeptide-associated complex subunit beta.